Here is a 218-residue protein sequence, read N- to C-terminus: Nonsense-mediated decay protein 4 (218 aa).

It localises to the cytoplasm. In terms of biological role, involved in nonsense-mediated decay of mRNAs containing premature stop codons. The sequence is that of Nonsense-mediated decay protein 4 (NMD4) from Saccharomyces cerevisiae (strain ATCC 204508 / S288c) (Baker's yeast).